The primary structure comprises 172 residues: Odorant-binding protein (172 aa).

An N-terminal signal peptide occupies residues 1–15 (MVKFLLIVLALGVSC). Intrachain disulfides connect cysteine 60-cysteine 64 and cysteine 79-cysteine 170.

The protein belongs to the calycin superfamily. Lipocalin family. As to quaternary structure, homodimer.

It is found in the secreted. This protein is found in nasal epithelium and it binds a wide variety of chemical odorants. This Rattus norvegicus (Rat) protein is Odorant-binding protein (Obp1f).